The chain runs to 247 residues: GTP cyclohydrolase 1 type 2 homolog (247 aa).

Residues H63, H64, D101, H215, and E219 each contribute to the a divalent metal cation site.

Belongs to the GTP cyclohydrolase I type 2/NIF3 family. In terms of assembly, toroid-shaped homohexamer. In the hexamer, 3 dimers assemble to form a ring-like structure surrounding a central hole.

Its function is as follows. Provides significant protection from radiation damage and may be involved in the degradation of radiation-damaged nucleotides. The sequence is that of GTP cyclohydrolase 1 type 2 homolog (ybgI) from Escherichia coli O157:H7.